Here is a 328-residue protein sequence, read N- to C-terminus: Acyl-CoA wax alcohol acyltransferase 1 (328 aa).

2 consecutive transmembrane segments (helical) span residues 12 to 32 (SLSLLQWPLSYVAMFWIVQPL) and 34 to 53 (ICLLFTPLWPLPTVYFVWLL).

The protein belongs to the diacylglycerol acyltransferase family.

The protein localises to the endoplasmic reticulum membrane. It catalyses the reaction a long chain fatty alcohol + a fatty acyl-CoA = a wax ester + CoA. The enzyme catalyses 1,2-di-(9Z-octadecenoyl)-sn-glycerol + (9Z)-octadecenoyl-CoA = 1,2,3-tri-(9Z-octadecenoyl)-glycerol + CoA. It carries out the reaction hexadecan-1-ol + (9Z)-octadecenoyl-CoA = hexadecanyl (9Z)-octadecenoate + CoA. The catalysed reaction is decan-1-ol + (9Z)-octadecenoyl-CoA = 1-O-decyl-(9Z)-octadecenoate + CoA. It catalyses the reaction (9Z)-hexadecen-1-ol + (9Z)-octadecenoyl-CoA = 1-O-(9Z)-hexadecenyl (9Z)-octadecenoate + CoA. The enzyme catalyses octadecan-1-ol + (9Z)-octadecenoyl-CoA = 1-O-octadecyl (9Z)-octadecenoate + CoA. It carries out the reaction (9Z)-octadecen-1-ol + (9Z)-octadecenoyl-CoA = 1-O-(9Z)-octadecenyl (9Z)-octadecenoate + CoA. The catalysed reaction is hexadecan-1-ol + hexadecanoyl-CoA = hexadecanyl hexadecanoate + CoA. It catalyses the reaction hexadecan-1-ol + (9Z)-hexadecenoyl-CoA = 1-O-hexadecyl (9Z)-hexadecenoate + CoA. The enzyme catalyses hexadecan-1-ol + octadecanoyl-CoA = hexadecanyl octadecanoate + CoA. It carries out the reaction eicosan-1-ol + (9Z)-octadecenoyl-CoA = 1-O-eicosanyl (9Z)-octadecenoate + CoA. Functionally, acyltransferase that catalyzes the formation of ester bonds between fatty alcohols and fatty acyl-CoAs to form wax monoesters. Shows a strong preference for decyl alcohol (C10), with less activity towards C16 and C18 alcohols. Shows a strong preference for saturated acyl-CoAs. This Mus musculus (Mouse) protein is Acyl-CoA wax alcohol acyltransferase 1 (Awat1).